A 216-amino-acid polypeptide reads, in one-letter code: Peptide methionine sulfoxide reductase MsrA (216 aa).

The active site involves C54.

Belongs to the MsrA Met sulfoxide reductase family.

It catalyses the reaction L-methionyl-[protein] + [thioredoxin]-disulfide + H2O = L-methionyl-(S)-S-oxide-[protein] + [thioredoxin]-dithiol. It carries out the reaction [thioredoxin]-disulfide + L-methionine + H2O = L-methionine (S)-S-oxide + [thioredoxin]-dithiol. Its function is as follows. Has an important function as a repair enzyme for proteins that have been inactivated by oxidation. Catalyzes the reversible oxidation-reduction of methionine sulfoxide in proteins to methionine. In Xanthomonas euvesicatoria pv. vesicatoria (strain 85-10) (Xanthomonas campestris pv. vesicatoria), this protein is Peptide methionine sulfoxide reductase MsrA.